The sequence spans 123 residues: MPTLNQLVRKPRKRPVAKSKVPALDANPQKRGVCTRVYTTTPKKPNSALRKVARVRLTNGFEVSSYIPGEGHNLQEHSVVLIRGGRVKDLPGVRYHIVRGTLDTAGVKNRKQSRSKYGAKRPK.

Positions 1–26 (MPTLNQLVRKPRKRPVAKSKVPALDA) are disordered. A 3-methylthioaspartic acid modification is found at Asp89. Residues 104-123 (TAGVKNRKQSRSKYGAKRPK) form a disordered region. Basic residues predominate over residues 108–123 (KNRKQSRSKYGAKRPK).

This sequence belongs to the universal ribosomal protein uS12 family. In terms of assembly, part of the 30S ribosomal subunit. Contacts proteins S8 and S17. May interact with IF1 in the 30S initiation complex.

Its function is as follows. With S4 and S5 plays an important role in translational accuracy. Interacts with and stabilizes bases of the 16S rRNA that are involved in tRNA selection in the A site and with the mRNA backbone. Located at the interface of the 30S and 50S subunits, it traverses the body of the 30S subunit contacting proteins on the other side and probably holding the rRNA structure together. The combined cluster of proteins S8, S12 and S17 appears to hold together the shoulder and platform of the 30S subunit. This chain is Small ribosomal subunit protein uS12, found in Acidithiobacillus ferrooxidans (strain ATCC 23270 / DSM 14882 / CIP 104768 / NCIMB 8455) (Ferrobacillus ferrooxidans (strain ATCC 23270)).